A 74-amino-acid polypeptide reads, in one-letter code: uncharacterized protein (74 aa).

The tract at residues 39–74 is disordered; the sequence is SSPQAPGTLKPRALVRPSPGPVQENHLSEAQFPPKL.

This is an uncharacterized protein from Homo sapiens (Human).